The sequence spans 273 residues: SUMO-1 cysteine protease S273R (273 aa).

Catalysis depends on residues His-168 and Asn-187. Position 226 (Gln-226) interacts with substrate. Cys-232 serves as the catalytic Nucleophile.

It belongs to the peptidase C63 family.

Its subcellular location is the host cytoplasm. The protein resides in the virion. Functionally, cysteine protease that plays several role during infection including processing of the structural polyprotein or inhibition of the host immune response. Catalyzes the maturation of the pp220 and pp62 polyprotein precursors into core-shell proteins. Plays a role in the disruption of host pyroptosis via specific cleavage of gasdermin D/GSDMD. In addition, strongly decreases the host cGAS-STING signaling by targeting IKBKE via its enzymatic activity. Also impairs host FOXJ1-mediated antiviral effect via degradation of FOXJ1. The sequence is that of SUMO-1 cysteine protease S273R from Ornithodoros (relapsing fever ticks).